The primary structure comprises 276 residues: Undecaprenyl-diphosphatase (276 aa).

The next 5 helical transmembrane spans lie at 84–104, 115–135, 188–208, 222–242, and 250–270; these read YRLGWYVIIGTIPICVLGLLF, LWVVATALVVFSGVIALAEYL, FGFLLAIPAVFASGLFSLPDA, QLLVATLIAFVVGLAAVSWFL, and MYWFVGYRVVVGVVVLILLAT.

This sequence belongs to the UppP family.

Its subcellular location is the cell membrane. The catalysed reaction is di-trans,octa-cis-undecaprenyl diphosphate + H2O = di-trans,octa-cis-undecaprenyl phosphate + phosphate + H(+). Its function is as follows. Catalyzes the dephosphorylation of undecaprenyl diphosphate (UPP). Confers resistance to bacitracin. The sequence is that of Undecaprenyl-diphosphatase from Mycobacterium ulcerans (strain Agy99).